A 405-amino-acid chain; its full sequence is Glyceraldehyde-3-phosphate dehydrogenase A, chloroplastic (405 aa).

Residues 1–68 (MASATFSVAK…GHKKSLVVEA (68 aa)) constitute a chloroplast transit peptide. Residues 80-81 (RI), D104, and R149 each bind NADP(+). Residues 221–223 (SCT), T252, R267, 280–281 (TG), and R303 contribute to the D-glyceraldehyde 3-phosphate site. C222 serves as the catalytic Nucleophile. An NADP(+)-binding site is contributed by N385.

It belongs to the glyceraldehyde-3-phosphate dehydrogenase family. As to quaternary structure, tetramer of either four A chains (GAPDH 2) or two A and two B chains (GAPDH 1).

It localises to the plastid. It is found in the chloroplast. It catalyses the reaction D-glyceraldehyde 3-phosphate + phosphate + NADP(+) = (2R)-3-phospho-glyceroyl phosphate + NADPH + H(+). The protein operates within carbohydrate biosynthesis; Calvin cycle. In Pisum sativum (Garden pea), this protein is Glyceraldehyde-3-phosphate dehydrogenase A, chloroplastic (GAPA).